The following is a 214-amino-acid chain: Nicotinamidase (214 aa).

D18 functions as the Proton acceptor in the catalytic mechanism. The a divalent metal cation site is built by D56, H58, H62, and H91. K116 is an active-site residue. The active-site Nucleophile is the C161.

This sequence belongs to the isochorismatase family. A divalent metal cation serves as cofactor.

It catalyses the reaction nicotinamide + H2O = nicotinate + NH4(+). It functions in the pathway cofactor biosynthesis; nicotinate biosynthesis; nicotinate from nicotinamide: step 1/1. Its function is as follows. Catalyzes the deamidation of nicotinamide (NAM) into nicotinate (Na). Functions in the deamidating salvage pathway for production of NAD from nicotinamide. The chain is Nicotinamidase from Acinetobacter baylyi (strain ATCC 33305 / BD413 / ADP1).